Reading from the N-terminus, the 309-residue chain is Dihydroorotate dehydrogenase B (NAD(+)), catalytic subunit (309 aa).

FMN-binding positions include Ser21 and 45-46; that span reads KA. Residues Lys45 and 69-73 contribute to the substrate site; that span reads NAIGL. FMN is bound by residues Asn99 and Asn127. Asn127 is a binding site for substrate. Cys130 acts as the Nucleophile in catalysis. Lys165 and Ile191 together coordinate FMN. 192–193 contributes to the substrate binding site; sequence NT. Residues Gly217, 243 to 244, and 265 to 266 each bind FMN; these read GG and GT.

Belongs to the dihydroorotate dehydrogenase family. Type 1 subfamily. In terms of assembly, heterotetramer of 2 PyrK and 2 PyrD type B subunits. Requires FMN as cofactor.

It is found in the cytoplasm. It catalyses the reaction (S)-dihydroorotate + NAD(+) = orotate + NADH + H(+). Its pathway is pyrimidine metabolism; UMP biosynthesis via de novo pathway; orotate from (S)-dihydroorotate (NAD(+) route): step 1/1. Its function is as follows. Catalyzes the conversion of dihydroorotate to orotate with NAD(+) as electron acceptor. In Bacillus thuringiensis (strain Al Hakam), this protein is Dihydroorotate dehydrogenase B (NAD(+)), catalytic subunit (pyrD).